Consider the following 359-residue polypeptide: Peptide chain release factor 1 (359 aa).

Gln235 bears the N5-methylglutamine mark. The segment at 280 to 306 (AERQRADSERSADRKSQVGSGDRSERI) is disordered.

The protein belongs to the prokaryotic/mitochondrial release factor family. Methylated by PrmC. Methylation increases the termination efficiency of RF1.

The protein resides in the cytoplasm. Functionally, peptide chain release factor 1 directs the termination of translation in response to the peptide chain termination codons UAG and UAA. In Rhizobium leguminosarum bv. trifolii (strain WSM2304), this protein is Peptide chain release factor 1.